We begin with the raw amino-acid sequence, 388 residues long: Protein-glutamate methylesterase/protein-glutamine glutaminase (388 aa).

A Response regulatory domain is found at 20-138 (RVMVVDDSVV…ESAGAEVFRH (119 aa)). Asp-71 bears the 4-aspartylphosphate mark. Residues 193–386 (PTAPRVLLIG…PKLVRLFSGD (194 aa)) enclose the CheB-type methylesterase domain. Residues Ser-204, His-232, and Asp-328 contribute to the active site.

The protein belongs to the CheB family. Phosphorylated by CheA. Phosphorylation of the N-terminal regulatory domain activates the methylesterase activity.

The protein resides in the cytoplasm. The catalysed reaction is [protein]-L-glutamate 5-O-methyl ester + H2O = L-glutamyl-[protein] + methanol + H(+). It catalyses the reaction L-glutaminyl-[protein] + H2O = L-glutamyl-[protein] + NH4(+). Its function is as follows. Involved in chemotaxis. Part of a chemotaxis signal transduction system that modulates chemotaxis in response to various stimuli. Catalyzes the demethylation of specific methylglutamate residues introduced into the chemoreceptors (methyl-accepting chemotaxis proteins or MCP) by CheR. Also mediates the irreversible deamidation of specific glutamine residues to glutamic acid. This is Protein-glutamate methylesterase/protein-glutamine glutaminase from Rhodopseudomonas palustris (strain HaA2).